Reading from the N-terminus, the 421-residue chain is Gamma-glutamyl phosphate reductase (421 aa).

Belongs to the gamma-glutamyl phosphate reductase family.

Its subcellular location is the cytoplasm. It carries out the reaction L-glutamate 5-semialdehyde + phosphate + NADP(+) = L-glutamyl 5-phosphate + NADPH + H(+). It functions in the pathway amino-acid biosynthesis; L-proline biosynthesis; L-glutamate 5-semialdehyde from L-glutamate: step 2/2. In terms of biological role, catalyzes the NADPH-dependent reduction of L-glutamate 5-phosphate into L-glutamate 5-semialdehyde and phosphate. The product spontaneously undergoes cyclization to form 1-pyrroline-5-carboxylate. The chain is Gamma-glutamyl phosphate reductase from Dinoroseobacter shibae (strain DSM 16493 / NCIMB 14021 / DFL 12).